The sequence spans 622 residues: Polypeptide N-acetylgalactosaminyltransferase 6 (622 aa).

The Cytoplasmic segment spans residues 1-8; sequence MRLLRRRH. The helical; Signal-anchor for type II membrane protein transmembrane segment at 9–28 threads the bilayer; it reads MSLRLAMLGSVFMLFLFIRQ. Residues 29–622 lie on the Lumenal side of the membrane; sequence KDVSNQEQAM…RDPYQLWLFV (594 aa). N-linked (GlcNAc...) asparagine glycosylation is present at asparagine 86. Residues 176–285 are catalytic subdomain A; sequence LPTTSVIIVF…HGWLEPLLAR (110 aa). Positions 269, 271, and 407 each coordinate Mn(2+). The catalytic subdomain B stretch occupies residues 348 to 410; sequence PIKSPTFAGG…PCSVVGHVFR (63 aa). Asparagine 476 carries an N-linked (GlcNAc...) asparagine glycan. Residues 506-622 enclose the Ricin B-type lectin domain; that stretch reads TNQCLDVGEN…RDPYQLWLFV (117 aa). A disulfide bond links cysteine 509 and cysteine 527. Positions 511, 514, 528, and 533 each coordinate UDP-N-acetyl-alpha-D-galactosamine. Disulfide bonds link cysteine 553–cysteine 566 and cysteine 597–cysteine 610.

The protein belongs to the glycosyltransferase 2 family. GalNAc-T subfamily. It depends on Mn(2+) as a cofactor.

It is found in the golgi apparatus membrane. The enzyme catalyses L-seryl-[protein] + UDP-N-acetyl-alpha-D-galactosamine = a 3-O-[N-acetyl-alpha-D-galactosaminyl]-L-seryl-[protein] + UDP + H(+). It catalyses the reaction L-threonyl-[protein] + UDP-N-acetyl-alpha-D-galactosamine = a 3-O-[N-acetyl-alpha-D-galactosaminyl]-L-threonyl-[protein] + UDP + H(+). It participates in protein modification; protein glycosylation. Catalyzes the initial reaction in O-linked oligosaccharide biosynthesis, the transfer of an N-acetyl-D-galactosamine residue to a serine or threonine residue on the protein receptor. May participate in synthesis of oncofetal fibronectin. Has activity toward Muc1a, Muc2, EA2 and fibronectin peptides. This chain is Polypeptide N-acetylgalactosaminyltransferase 6 (Galnt6), found in Mus musculus (Mouse).